A 490-amino-acid chain; its full sequence is GTPase Der (490 aa).

EngA-type G domains follow at residues 3–166 (PVVA…MEDL) and 203–376 (IKLA…DSST). Residues 9 to 16 (GRPNVGKS), 56 to 60 (DTGGI), 118 to 121 (NKTD), 209 to 216 (GRPNVGKS), 256 to 260 (DTAGV), and 321 to 324 (NKWD) each bind GTP. Residues 377 to 461 (RRVGTSMLTR…PIRIQFKEGE (85 aa)) enclose the KH-like domain.

This sequence belongs to the TRAFAC class TrmE-Era-EngA-EngB-Septin-like GTPase superfamily. EngA (Der) GTPase family. Associates with the 50S ribosomal subunit.

GTPase that plays an essential role in the late steps of ribosome biogenesis. The polypeptide is GTPase Der (Escherichia coli O17:K52:H18 (strain UMN026 / ExPEC)).